The following is a 246-amino-acid chain: Sulfate transporter CysZ (246 aa).

The next 4 membrane-spanning stretches (helical) occupy residues 24–44 (LFVLIPLSINLLVFALLIGFA), 69–89 (IVWPLFVLLVLVIVFFTFTMV), 148–168 (LLVLSFVPGVNLVATPLWILF), and 214–234 (LLIPLVNLVMMPAAVAGATLF).

It belongs to the CysZ family.

It is found in the cell inner membrane. In terms of biological role, high affinity, high specificity proton-dependent sulfate transporter, which mediates sulfate uptake. Provides the sulfur source for the cysteine synthesis pathway. The sequence is that of Sulfate transporter CysZ from Pseudomonas paraeruginosa (strain DSM 24068 / PA7) (Pseudomonas aeruginosa (strain PA7)).